The following is a 397-amino-acid chain: Methylthioribose kinase (397 aa).

ATP is bound by residues asparagine 44, lysine 61, and glutamate 115–leucine 117. Substrate is bound at residue aspartate 233. Aspartate 250–glutamate 252 provides a ligand contact to ATP. A substrate-binding site is contributed by arginine 340.

It belongs to the methylthioribose kinase family. As to quaternary structure, homodimer.

The enzyme catalyses 5-(methylsulfanyl)-D-ribose + ATP = 5-(methylsulfanyl)-alpha-D-ribose 1-phosphate + ADP + H(+). Its pathway is amino-acid biosynthesis; L-methionine biosynthesis via salvage pathway; S-methyl-5-thio-alpha-D-ribose 1-phosphate from S-methyl-5'-thioadenosine (hydrolase route): step 2/2. Functionally, catalyzes the phosphorylation of methylthioribose into methylthioribose-1-phosphate. This chain is Methylthioribose kinase (mtnK), found in Bacillus subtilis (strain 168).